The chain runs to 488 residues: Glutamyl-tRNA(Gln) amidotransferase subunit A (488 aa).

Active-site charge relay system residues include K77 and S152. S176 acts as the Acyl-ester intermediate in catalysis.

Belongs to the amidase family. GatA subfamily. Heterotrimer of A, B and C subunits.

It carries out the reaction L-glutamyl-tRNA(Gln) + L-glutamine + ATP + H2O = L-glutaminyl-tRNA(Gln) + L-glutamate + ADP + phosphate + H(+). Its function is as follows. Allows the formation of correctly charged Gln-tRNA(Gln) through the transamidation of misacylated Glu-tRNA(Gln) in organisms which lack glutaminyl-tRNA synthetase. The reaction takes place in the presence of glutamine and ATP through an activated gamma-phospho-Glu-tRNA(Gln). The sequence is that of Glutamyl-tRNA(Gln) amidotransferase subunit A from Streptococcus pyogenes serotype M12 (strain MGAS2096).